A 483-amino-acid chain; its full sequence is Inositol-pentakisphosphate 2-kinase (483 aa).

Positions 140 to 144 (EIKPK) match the EXKPK motif motif. The segment at 279–298 (SNRSGEPRKMHLSESKPHCE) is disordered. Residues 281–297 (RSGEPRKMHLSESKPHC) are compositionally biased toward basic and acidic residues.

It belongs to the IPK1 type 2 family. As to expression, expressed both maternally and zygotically. Expressed in cleavage-stage embryos. Ubiquitously distributed throughout blastula stages of embryogenesis. At the onset of gastrulation, it is enriched in cells around the blastoderm margin. At shield stage, expression is detected in the deep involuted cells that contribute to mesendoderm. During mid and late gastrula stages, it is strongly expressed in axial mesendoderm. However, it is not present in the nascent tailbud at yolk plug closure (YPC) stage. Expression in axial mesendoderm is reduced at the 2 somite stage (SS). At 6 SS, it is expressed in cells surrounding Kupffer's vesicle, but apparently not within. By 10 SS, it is no longer detected as a specific signal above background.

Its subcellular location is the cytoplasm. It localises to the nucleus. It catalyses the reaction 1D-myo-inositol 1,3,4,5,6-pentakisphosphate + ATP = 1D-myo-inositol hexakisphosphate + ADP + H(+). Functionally, phosphorylates Ins(1,3,4,5,6)P5 at position 2 to form Ins(1,2,3,4,5,6)P6 (InsP6 or phytate). InsP6 is involved in many processes such as mRNA export, non-homologous end-joining, endocytosis and ion channel regulation. InsP6 also acts as a key regulator of left-right asymmetry in embryo, probably by regulating asymmetric Ca(2+) during left-right specification. The sequence is that of Inositol-pentakisphosphate 2-kinase (ippk) from Danio rerio (Zebrafish).